The following is a 101-amino-acid chain: Small ribosomal subunit protein bS6 (101 aa).

It belongs to the bacterial ribosomal protein bS6 family.

Functionally, binds together with bS18 to 16S ribosomal RNA. The polypeptide is Small ribosomal subunit protein bS6 (Micrococcus luteus (strain ATCC 4698 / DSM 20030 / JCM 1464 / CCM 169 / CCUG 5858 / IAM 1056 / NBRC 3333 / NCIMB 9278 / NCTC 2665 / VKM Ac-2230) (Micrococcus lysodeikticus)).